Reading from the N-terminus, the 407-residue chain is Substance-P receptor (407 aa).

Over 1–31 the chain is Extracellular; sequence MDNVLQVDSDLFPNISTNTSEPNQFVQPAWQ. 2 N-linked (GlcNAc...) asparagine glycosylation sites follow: Asn14 and Asn18. The helical transmembrane segment at 32 to 54 threads the bilayer; that stretch reads IVLWAAAYTVIVVTSVVGNVVVM. At 55-64 the chain is on the cytoplasmic side; it reads WIILAHKRMR. A helical membrane pass occupies residues 65-86; the sequence is TVTNYFLVNLAFAEASMAAFNT. The Extracellular segment spans residues 87 to 106; sequence VVNFTYAVHNEWYYGLFYCK. Residues Cys105 and Cys180 are joined by a disulfide bond. Residues 107–128 traverse the membrane as a helical segment; that stretch reads FHNFFPIAAVFASIYSMTAVAF. Residues 129 to 148 are Cytoplasmic-facing; it reads DRYMAIIHPLQPRLSATATK. Residues 149–169 form a helical membrane-spanning segment; that stretch reads VVICVIWVLALLLAFPQGYYS. At 170–194 the chain is on the extracellular side; that stretch reads TTETMPNRVVCMIEWPEHPNKIYEK. A helical membrane pass occupies residues 195–219; that stretch reads VYHICVTVLIYFLPLLVIGYAYTVV. Topologically, residues 220 to 248 are cytoplasmic; it reads GITLWASEIPGDSSDRYHEQVSAKRKVVK. Residues 249–270 form a helical membrane-spanning segment; sequence MMIVVVCTFAICWLPFHIFFLL. The Extracellular segment spans residues 271–283; it reads PYINPDLYLEKFI. Residues 284-308 form a helical membrane-spanning segment; that stretch reads QQVYLAIMWLAMSSTMYNPIIYCCL. Topologically, residues 309 to 407 are cytoplasmic; it reads NDRFRLGFKH…SFSFYSNMLS (99 aa). Cys322 carries S-palmitoyl cysteine lipidation. Residues 365 to 394 are disordered; that stretch reads HEEELEDGPKTTPSSLDLTSNGSSRSDSKT. Over residues 375-394 the composition is skewed to polar residues; that stretch reads TTPSSLDLTSNGSSRSDSKT.

It belongs to the G-protein coupled receptor 1 family. In terms of assembly, interacts with ARRB1.

Its subcellular location is the cell membrane. This is a receptor for the tachykinin neuropeptide substance P. It is probably associated with G proteins that activate a phosphatidylinositol-calcium second messenger system. The sequence is that of Substance-P receptor (TACR1) from Canis lupus familiaris (Dog).